A 101-amino-acid polypeptide reads, in one-letter code: Urease subunit beta (101 aa).

Belongs to the urease beta subunit family. Heterotrimer of UreA (gamma), UreB (beta) and UreC (alpha) subunits. Three heterotrimers associate to form the active enzyme.

The protein localises to the cytoplasm. It carries out the reaction urea + 2 H2O + H(+) = hydrogencarbonate + 2 NH4(+). Its pathway is nitrogen metabolism; urea degradation; CO(2) and NH(3) from urea (urease route): step 1/1. This Mesorhizobium japonicum (strain LMG 29417 / CECT 9101 / MAFF 303099) (Mesorhizobium loti (strain MAFF 303099)) protein is Urease subunit beta.